The sequence spans 160 residues: SsrA-binding protein (160 aa).

This sequence belongs to the SmpB family.

The protein resides in the cytoplasm. Its function is as follows. Required for rescue of stalled ribosomes mediated by trans-translation. Binds to transfer-messenger RNA (tmRNA), required for stable association of tmRNA with ribosomes. tmRNA and SmpB together mimic tRNA shape, replacing the anticodon stem-loop with SmpB. tmRNA is encoded by the ssrA gene; the 2 termini fold to resemble tRNA(Ala) and it encodes a 'tag peptide', a short internal open reading frame. During trans-translation Ala-aminoacylated tmRNA acts like a tRNA, entering the A-site of stalled ribosomes, displacing the stalled mRNA. The ribosome then switches to translate the ORF on the tmRNA; the nascent peptide is terminated with the 'tag peptide' encoded by the tmRNA and targeted for degradation. The ribosome is freed to recommence translation, which seems to be the essential function of trans-translation. The protein is SsrA-binding protein of Salmonella arizonae (strain ATCC BAA-731 / CDC346-86 / RSK2980).